The following is a 221-amino-acid chain: Pleckstrin homology domain-containing family B member 2 (221 aa).

A PH domain is found at 2-109 (AFVKSGWLLR…WKFTLQDSRT (108 aa)). Lys-20 provides a ligand contact to a 1,2-diacyl-sn-glycero-3-phospho-L-serine.

In terms of tissue distribution, highly expressed in brain, retina, heart and kidney. Detected at lower levels in lung, muscle and nerve.

The protein resides in the recycling endosome membrane. Its function is as follows. Involved in retrograde transport of recycling endosomes. This chain is Pleckstrin homology domain-containing family B member 2 (Plekhb2), found in Mus musculus (Mouse).